We begin with the raw amino-acid sequence, 321 residues long: Basic leucine zipper 34 (321 aa).

Positions 97-189 (TDDDNLHSNP…SGNRILDPKR (93 aa)) are disordered. Low complexity-rich tracts occupy residues 110–133 (NNKNNNVGPTGSSSNTSTPSNSFN), 145–155 (NMNNNINNNYN), and 172–182 (SNNNSGDSSGN). One can recognise a bZIP domain in the interval 186–238 (DPKRVKRILANRQSAQRSRVRKLQYISELERSVTSLQAEVSVLSPRVAFLDHQ). The basic motif stretch occupies residues 188-207 (KRVKRILANRQSAQRSRVRK). The tract at residues 214–235 (LERSVTSLQAEVSVLSPRVAFL) is leucine-zipper.

Forms heterodimers with BZIP18, BZIP43 and VIP1/BZIP51. Expressed in vascular tissues of leaves, stems and siliques, anthers, filaments, tapetum, mature pollen grains, pistil vascular tissues and papillar cells, and funiculi.

It localises to the nucleus. In terms of biological role, transcriptional activator involved in the sporophytic control of cell wall patterning and gametophytic control of pollen development. May play a role in the control of metabolic pathways regulating cellular transport and lipid metabolism. The chain is Basic leucine zipper 34 from Arabidopsis thaliana (Mouse-ear cress).